Reading from the N-terminus, the 92-residue chain is Small ribosomal subunit protein uS19c (92 aa).

The protein belongs to the universal ribosomal protein uS19 family.

It is found in the plastid. Its subcellular location is the chloroplast. Functionally, protein S19 forms a complex with S13 that binds strongly to the 16S ribosomal RNA. The polypeptide is Small ribosomal subunit protein uS19c (Fagopyrum esculentum subsp. ancestrale (Wild buckwheat)).